We begin with the raw amino-acid sequence, 395 residues long: Nuclear hormone receptor family member nhr-10 (395 aa).

Positions Glu15–Gln90 form a DNA-binding region, nuclear receptor. 2 consecutive NR C4-type zinc fingers follow at residues Cys18 to Cys38 and Cys54 to Cys78. Residues Pro152 to Ile392 form the NR LBD domain.

Belongs to the nuclear hormone receptor family.

It localises to the nucleus. In terms of biological role, probable transcription factor that acts in a feed-forward loop with nhr-68 to activate genes involved in the vitamin B12-independent breakdown of the short-chain fatty acid propionate. This pathway is triggered in response to a diet low in vitamin B12, when canonical vitamin B12-dependent propionate breakdown cannot function; the resulting accumulation of propionate is probably sensed by nhr-10 and/or nhr-68. This chain is Nuclear hormone receptor family member nhr-10 (nhr-10), found in Caenorhabditis elegans.